A 150-amino-acid chain; its full sequence is FAD synthase (150 aa).

ATP is bound by residues 11–12 (TF), 16–19 (HPGH), aspartate 96, and tyrosine 124.

It belongs to the archaeal FAD synthase family. Homodimer. A divalent metal cation serves as cofactor.

It catalyses the reaction FMN + ATP + H(+) = FAD + diphosphate. The protein operates within cofactor biosynthesis; FAD biosynthesis; FAD from FMN: step 1/1. Functionally, catalyzes the transfer of the AMP portion of ATP to flavin mononucleotide (FMN) to produce flavin adenine dinucleotide (FAD) coenzyme. The chain is FAD synthase from Methanococcus maripaludis (strain C5 / ATCC BAA-1333).